The primary structure comprises 198 residues: MTTIMIAVLAIALLATLFGAILGFASIRFKVEADPIVDQIDAILPQTQCGQCGYPGCRPYAEAIANGDSINKCPPGGQATIEKLADLMGVEAEESAHDLEGKVKKVAFIHEDMCIGCTKCIQACPVDAIVGGTKALHTVIKDECTGCDLCVAPCPTDCIEMIPLETTTETWKWQLNAIPVVNISEANPNSATSRDQNN.

Positions 1 to 26 (MTTIMIAVLAIALLATLFGAILGFAS) are hydrophobic. Positions 32–90 (EADPIVDQIDAILPQTQCGQCGYPGCRPYAEAIANGDSINKCPPGGQATIEKLADLMGV) constitute a 4Fe-4S domain. [4Fe-4S] cluster contacts are provided by Cys-49, Cys-52, Cys-57, Cys-73, Cys-114, Cys-117, Cys-120, Cys-124, Cys-144, Cys-147, Cys-150, and Cys-154. 2 4Fe-4S ferredoxin-type domains span residues 105–134 (KVAF…GGTK) and 135–164 (ALHT…MIPL).

The protein belongs to the 4Fe4S bacterial-type ferredoxin family. RnfB subfamily. As to quaternary structure, the complex is composed of six subunits: RnfA, RnfB, RnfC, RnfD, RnfE and RnfG. Requires [4Fe-4S] cluster as cofactor.

The protein localises to the cell inner membrane. Its function is as follows. Part of a membrane-bound complex that couples electron transfer with translocation of ions across the membrane. The chain is Ion-translocating oxidoreductase complex subunit B from Vibrio vulnificus (strain CMCP6).